Here is a 272-residue protein sequence, read N- to C-terminus: MGIRRCKPTSAGRRFVTYHDFSEITKDEPYKPLTTCIKKRKGRNNQGRITSWLKGGGNRKLYRIIDFKRNKHGIPAKIESIQYDPNRSARIALLKYMDGEYRYILAPDGLKVGDTIMSGSGIDIKVGNALPLKEIPLGTMIHNIELFPNGGGKLVRSAGTAAQLMAKEGKYAHVKLPSGEVRLINVNCFATIGQVSNLEHENVIIGKAGRTRHMGRRPSVRGVAMNPIDHPLGGGEGKSSGGRAACTPWGKPEGVKTRKNKRTDKFIIKRRK.

Positions 222–272 are disordered; the sequence is GVAMNPIDHPLGGGEGKSSGGRAACTPWGKPEGVKTRKNKRTDKFIIKRRK. Over residues 263–272 the composition is skewed to basic and acidic residues; it reads TDKFIIKRRK.

Belongs to the universal ribosomal protein uL2 family. Part of the 50S ribosomal subunit. Forms a bridge to the 30S subunit in the 70S ribosome.

In terms of biological role, one of the primary rRNA binding proteins. Required for association of the 30S and 50S subunits to form the 70S ribosome, for tRNA binding and peptide bond formation. It has been suggested to have peptidyltransferase activity; this is somewhat controversial. Makes several contacts with the 16S rRNA in the 70S ribosome. This Thermodesulfovibrio yellowstonii (strain ATCC 51303 / DSM 11347 / YP87) protein is Large ribosomal subunit protein uL2.